We begin with the raw amino-acid sequence, 143 residues long: MSFSPYSTMITVCVCFNSRVQLTVPSFTAWLRSRYSKALFMVLRRAAQEKDKGVCQGWHCVKKWACKGRIPGQPLQPQPLGPYLRSLSQHPATQTPRPQARASSRYLELHRSQNRGGSEFKFWFCYCLIACCRDSISSSGKWE.

This is an uncharacterized protein from Homo sapiens (Human).